A 209-amino-acid polypeptide reads, in one-letter code: Molybdenum cofactor guanylyltransferase (209 aa).

GTP-binding positions include 13 to 15 (LAG), lysine 26, asparagine 54, aspartate 74, and aspartate 104. Residue aspartate 104 participates in Mg(2+) binding.

The protein belongs to the MobA family. Monomer. Mg(2+) is required as a cofactor.

It is found in the cytoplasm. It carries out the reaction Mo-molybdopterin + GTP + H(+) = Mo-molybdopterin guanine dinucleotide + diphosphate. Its function is as follows. Transfers a GMP moiety from GTP to Mo-molybdopterin (Mo-MPT) cofactor (Moco or molybdenum cofactor) to form Mo-molybdopterin guanine dinucleotide (Mo-MGD) cofactor. This is Molybdenum cofactor guanylyltransferase from Acinetobacter baumannii (strain ATCC 17978 / DSM 105126 / CIP 53.77 / LMG 1025 / NCDC KC755 / 5377).